Here is a 116-residue protein sequence, read N- to C-terminus: Large ribosomal subunit protein bL19 (116 aa).

The protein belongs to the bacterial ribosomal protein bL19 family.

In terms of biological role, this protein is located at the 30S-50S ribosomal subunit interface and may play a role in the structure and function of the aminoacyl-tRNA binding site. The chain is Large ribosomal subunit protein bL19 from Clostridium botulinum (strain Eklund 17B / Type B).